We begin with the raw amino-acid sequence, 450 residues long: Phosphoglucosamine mutase (450 aa).

Catalysis depends on Ser97, which acts as the Phosphoserine intermediate. 4 residues coordinate Mg(2+): Ser97, Asp236, Asp238, and Asp240. Ser97 is subject to Phosphoserine.

It belongs to the phosphohexose mutase family. Mg(2+) serves as cofactor. Post-translationally, activated by phosphorylation.

It carries out the reaction alpha-D-glucosamine 1-phosphate = D-glucosamine 6-phosphate. In terms of biological role, catalyzes the conversion of glucosamine-6-phosphate to glucosamine-1-phosphate. The protein is Phosphoglucosamine mutase of Prochlorococcus marinus (strain MIT 9312).